Reading from the N-terminus, the 410-residue chain is Multifunctional CCA protein (410 aa).

ATP is bound by residues Gly-8 and Arg-11. CTP contacts are provided by Gly-8 and Arg-11. Mg(2+)-binding residues include Asp-21 and Asp-23. Residues Arg-91, Arg-137, and Arg-140 each contribute to the ATP site. 3 residues coordinate CTP: Arg-91, Arg-137, and Arg-140. An HD domain is found at 228–329; the sequence is TGVHVLSVLQ…LELLQSFDVY (102 aa).

Belongs to the tRNA nucleotidyltransferase/poly(A) polymerase family. Bacterial CCA-adding enzyme type 1 subfamily. Monomer. Can also form homodimers and oligomers. Requires Mg(2+) as cofactor. It depends on Ni(2+) as a cofactor.

The enzyme catalyses a tRNA precursor + 2 CTP + ATP = a tRNA with a 3' CCA end + 3 diphosphate. It carries out the reaction a tRNA with a 3' CCA end + 2 CTP + ATP = a tRNA with a 3' CCACCA end + 3 diphosphate. Functionally, catalyzes the addition and repair of the essential 3'-terminal CCA sequence in tRNAs without using a nucleic acid template. Adds these three nucleotides in the order of C, C, and A to the tRNA nucleotide-73, using CTP and ATP as substrates and producing inorganic pyrophosphate. tRNA 3'-terminal CCA addition is required both for tRNA processing and repair. Also involved in tRNA surveillance by mediating tandem CCA addition to generate a CCACCA at the 3' terminus of unstable tRNAs. While stable tRNAs receive only 3'-terminal CCA, unstable tRNAs are marked with CCACCA and rapidly degraded. The sequence is that of Multifunctional CCA protein from Pseudomonas aeruginosa (strain LESB58).